Reading from the N-terminus, the 266-residue chain is MEITTLQIVLVFIVACIAGMGSILDEFQFHRPLIACTLVGIVLGDMKTGIIIGGTLEMIALGWMNIGAAVAPDAALASIISTILVIAGHQSIGAGIALAIPLAAAGQVLTIIVRTITVAFQHAADKAADNGNLTAISWIHVSSLFLQAMRVAIPAVIVALSVGTSEVQNMLNAIPEVVTNGLNIAGGMIVVVGYAMVINMMRAGYLMPFFYLGFVTAAFTNFNLVALGVIGTVMAVLYIQLSPKYNRVAGAPAQAAGNNDLDNELD.

The residue at position 1 (methionine 1) is an N-formylmethionine. Residues 1–4 are Periplasmic-facing; it reads MEIT. The PTS EIIC type-4 domain occupies 1-237; sequence MEITTLQIVL…GVIGTVMAVL (237 aa). An intramembrane segment occupies 5–43; sequence TLQIVLVFIVACIAGMGSILDEFQFHRPLIACTLVGIVL. Residues 44 to 46 lie on the Periplasmic side of the membrane; that stretch reads GDM. Residues 47 to 86 lie within the membrane without spanning it; it reads KTGIIIGGTLEMIALGWMNIGAAVAPDAALASIISTILVI. At 87–90 the chain is on the periplasmic side; it reads AGHQ. A transmembrane helix spans residues 91 to 124; it reads SIGAGIALAIPLAAAGQVLTIIVRTITVAFQHAA. The Cytoplasmic segment spans residues 125–132; it reads DKAADNGN. A transmembrane helix spans residues 133 to 160; sequence LTAISWIHVSSLFLQAMRVAIPAVIVAL. The Periplasmic portion of the chain corresponds to 161 to 176; that stretch reads SVGTSEVQNMLNAIPE. At 177-200 the chain is embedded in the membrane; the sequence is VVTNGLNIAGGMIVVVGYAMVINM. At 201–207 the chain is on the cytoplasmic side; that stretch reads MRAGYLM. The segment at 208 to 218 is a transmembrane helix; it reads PFFYLGFVTAA. Residues 219 to 224 lie on the Periplasmic side of the membrane; it reads FTNFNL. At 225 to 242 the chain is embedded in the membrane; it reads VALGVIGTVMAVLYIQLS. The Cytoplasmic portion of the chain corresponds to 243–266; sequence PKYNRVAGAPAQAAGNNDLDNELD.

Homotrimer of protomers that are composed of two subunits, IIC and IID.

Its subcellular location is the cell inner membrane. Its function is as follows. The phosphoenolpyruvate-dependent sugar phosphotransferase system (sugar PTS), a major carbohydrate active transport system, catalyzes the phosphorylation of incoming sugar substrates concomitantly with their translocation across the cell membrane. The enzyme II ManXYZ PTS system is involved in mannose transport. This is PTS system mannose-specific EIIC component (manY) from Escherichia coli O157:H7.